The primary structure comprises 171 residues: tRNA-specific adenosine deaminase (171 aa).

The 128-residue stretch at 6 to 133 folds into the CMP/dCMP-type deaminase domain; the sequence is EEQTYFMQEA…ERLNHRVQVE (128 aa). A Zn(2+)-binding site is contributed by histidine 57. Glutamate 59 (proton donor) is an active-site residue. The Zn(2+) site is built by cysteine 87 and cysteine 90.

This sequence belongs to the cytidine and deoxycytidylate deaminase family. Homodimer. Zn(2+) serves as cofactor.

The enzyme catalyses adenosine(34) in tRNA + H2O + H(+) = inosine(34) in tRNA + NH4(+). Catalyzes the deamination of adenosine to inosine at the wobble position 34 of tRNA(Arg2). This chain is tRNA-specific adenosine deaminase, found in Streptococcus pyogenes serotype M1.